Reading from the N-terminus, the 294-residue chain is Acetylglutamate kinase (294 aa).

Substrate contacts are provided by residues glycine 63 to glycine 64, arginine 85, and asparagine 188.

Belongs to the acetylglutamate kinase family. ArgB subfamily.

It is found in the cytoplasm. It carries out the reaction N-acetyl-L-glutamate + ATP = N-acetyl-L-glutamyl 5-phosphate + ADP. It functions in the pathway amino-acid biosynthesis; L-arginine biosynthesis; N(2)-acetyl-L-ornithine from L-glutamate: step 2/4. Functionally, catalyzes the ATP-dependent phosphorylation of N-acetyl-L-glutamate. This chain is Acetylglutamate kinase, found in Methanococcus maripaludis (strain C6 / ATCC BAA-1332).